A 150-amino-acid chain; its full sequence is Arginine repressor (150 aa).

Belongs to the ArgR family.

Its subcellular location is the cytoplasm. Its pathway is amino-acid biosynthesis; L-arginine biosynthesis [regulation]. In terms of biological role, regulates arginine biosynthesis genes. The polypeptide is Arginine repressor (Psychromonas ingrahamii (strain DSM 17664 / CCUG 51855 / 37)).